The following is a 398-amino-acid chain: Acetate kinase 2 (398 aa).

A Mg(2+)-binding site is contributed by Asn7. Lys14 provides a ligand contact to ATP. Position 91 (Arg91) interacts with substrate. Asp148 functions as the Proton donor/acceptor in the catalytic mechanism. ATP-binding positions include 208–212, 283–285, and 331–335; these read HLGNG, DFR, and GVGEN. Glu384 is a binding site for Mg(2+).

This sequence belongs to the acetokinase family. In terms of assembly, homodimer. Requires Mg(2+) as cofactor. The cofactor is Mn(2+).

Its subcellular location is the cytoplasm. It carries out the reaction acetate + ATP = acetyl phosphate + ADP. It functions in the pathway metabolic intermediate biosynthesis; acetyl-CoA biosynthesis; acetyl-CoA from acetate: step 1/2. In terms of biological role, catalyzes the formation of acetyl phosphate from acetate and ATP. Can also catalyze the reverse reaction. This Clostridium perfringens (strain 13 / Type A) protein is Acetate kinase 2.